The following is a 327-amino-acid chain: Complex I intermediate-associated protein 30, mitochondrial (327 aa).

The transit peptide at 1–24 directs the protein to the mitochondrion; sequence MALVHKLLRGTYILRKFSKPASAL. Residues 42-63 form a disordered region; sequence PVASPGKASSQRKTEGDLQGDH. Residues 53–63 are compositionally biased toward basic and acidic residues; sequence RKTEGDLQGDH. A Phosphoserine modification is found at Ser318.

Belongs to the CIA30 family. In terms of assembly, part of the mitochondrial complex I assembly/MCIA complex that comprises at least the core subunits TMEM126B, NDUFAF1, ECSIT and ACAD9 and complement subunits such as COA1 and TMEM186. Interacts with ECSIT. Interacts with ACAD9. At early stages of complex I assembly, it is found in intermediate subcomplexes that contain different subunits including NDUFB6, NDUFA6, NDUFA9, NDUFS3, NDUFS7, ND1, ND2 and ND3. Interacts with TMEM70 and TMEM242.

The protein resides in the mitochondrion. Its subcellular location is the mitochondrion matrix. As part of the MCIA complex, involved in the assembly of the mitochondrial complex I. The protein is Complex I intermediate-associated protein 30, mitochondrial of Pongo pygmaeus (Bornean orangutan).